Here is a 143-residue protein sequence, read N- to C-terminus: Ribosome maturation factor RimP (143 aa).

It belongs to the RimP family.

The protein resides in the cytoplasm. Required for maturation of 30S ribosomal subunits. This chain is Ribosome maturation factor RimP, found in Nitrosomonas eutropha (strain DSM 101675 / C91 / Nm57).